Here is a 255-residue protein sequence, read N- to C-terminus: H-2 class II histocompatibility antigen, E-U alpha chain (255 aa).

The first 25 residues, methionine 1–alanine 25, serve as a signal peptide directing secretion. An alpha-1 region spans residues isoleucine 26 to asparagine 109. Topologically, residues isoleucine 26–asparagine 217 are extracellular. Residues valine 110 to tryptophan 203 are alpha-2. In terms of domain architecture, Ig-like C1-type spans proline 112 to glutamate 204. A disulfide bridge links cysteine 132 with cysteine 188. Asparagine 143 is a glycosylation site (N-linked (GlcNAc...) asparagine). The tract at residues glutamate 204–glutamate 216 is connecting peptide. A helical transmembrane segment spans residues valine 218–isoleucine 238. At methionine 239–leucine 255 the chain is on the cytoplasmic side.

It belongs to the MHC class II family.

It is found in the membrane. This Mus musculus (Mouse) protein is H-2 class II histocompatibility antigen, E-U alpha chain (H2-Ea).